The chain runs to 137 residues: Basic phospholipase A2 homolog APL-K49 (137 aa).

A signal peptide spans 1 to 16 (MRTLWIVALLLVGVEG). 7 disulfides stabilise this stretch: Cys42–Cys131, Cys44–Cys60, Cys59–Cys111, Cys65–Cys137, Cys66–Cys104, Cys73–Cys97, and Cys91–Cys102. An important for membrane-damaging activities in eukaryotes and bacteria; heparin-binding region spans residues 121-133 (KKYKAYFKLKCKK).

The protein belongs to the phospholipase A2 family. Group II subfamily. K49 sub-subfamily. Monomer. As to expression, expressed by the venom gland.

The protein localises to the secreted. Its function is as follows. Snake venom phospholipase A2 (PLA2) that lacks enzymatic activity. Does not show antibacterial activity. Is myotoxic and displays edema-inducing activities. A model of myotoxic mechanism has been proposed: an apo Lys49-PLA2 is activated by the entrance of a hydrophobic molecule (e.g. fatty acid) at the hydrophobic channel of the protein leading to a reorientation of a monomer. This reorientation causes a transition between 'inactive' to 'active' states, causing alignment of C-terminal and membrane-docking sites (MDoS) side-by-side and putting the membrane-disruption sites (MDiS) in the same plane, exposed to solvent and in a symmetric position for both monomers. The MDoS region stabilizes the toxin on membrane by the interaction of charged residues with phospholipid head groups. Subsequently, the MDiS region destabilizes the membrane with penetration of hydrophobic residues. This insertion causes a disorganization of the membrane, allowing an uncontrolled influx of ions (i.e. calcium and sodium), and eventually triggering irreversible intracellular alterations and cell death. The chain is Basic phospholipase A2 homolog APL-K49 from Agkistrodon piscivorus leucostoma (Western cottonmouth).